Consider the following 112-residue polypeptide: U15-hexatoxin-Hi1a (112 aa).

The N-terminal stretch at 1–18 (MNTLIAFAVLLLLSTTLG) is a signal peptide. A propeptide spanning residues 19–73 (DTDDKVSHEEIQERKELSGISEELLLQQLEAVEAALMEKERLEEMEEDGNSREKR) is cleaved from the precursor. 3 disulfides stabilise this stretch: Cys-74–Cys-88, Cys-81–Cys-93, and Cys-87–Cys-107.

The protein belongs to the neurotoxin 14 (magi-1) family. 08 (Ltx-4) subfamily. Expressed by the venom gland.

The protein resides in the secreted. In terms of biological role, probable ion channel inhibitor. The polypeptide is U15-hexatoxin-Hi1a (Hadronyche infensa (Fraser island funnel-web spider)).